The following is a 306-amino-acid chain: MYVHIDNFLVYLRVEKNASPRTTESYQKDLFHGLDYFASRLGKEDHAIVPSDIDHRIFRHYLAHMQKQGLARATMARRLAAWRSFYRYLYREKIIDGNPLLRVASPKLEKRLPRFLYEDEAKELVEAPDTKQPLGMRDRALLETLYAGGLRISELVLLDLGDLDISSGYIRVTGKRARERLVPLGSMAVEALQAYLAKARPRLMANSVAKKINNALFLNCRGERLSARGIRKILDKYVEKVSLERKISPHTLRHSFATHLLNAGADLRSVQELMGHVRLSSTQVYTHVTGERLKKVYRKSHPRAKG.

Residues 1–90 form the Core-binding (CB) domain; that stretch reads MYVHIDNFLV…AWRSFYRYLY (90 aa). Residues 111–298 form the Tyr recombinase domain; it reads RLPRFLYEDE…TGERLKKVYR (188 aa). Active-site residues include Arg-151, Lys-175, His-250, Arg-253, and His-276. The active-site O-(3'-phospho-DNA)-tyrosine intermediate is the Tyr-285.

It belongs to the 'phage' integrase family. XerC subfamily. In terms of assembly, forms a cyclic heterotetrameric complex composed of two molecules of XerC and two molecules of XerD.

The protein localises to the cytoplasm. In terms of biological role, site-specific tyrosine recombinase, which acts by catalyzing the cutting and rejoining of the recombining DNA molecules. The XerC-XerD complex is essential to convert dimers of the bacterial chromosome into monomers to permit their segregation at cell division. It also contributes to the segregational stability of plasmids. This chain is Tyrosine recombinase XerC, found in Pelotomaculum thermopropionicum (strain DSM 13744 / JCM 10971 / SI).